Here is a 363-residue protein sequence, read N- to C-terminus: 3-ketodihydrosphingosine reductase TSC10 (363 aa).

Residue L10 coordinates NADP(+). Positions 13, 15, and 17 each coordinate NADPH. The GXSXG signature appears at G13 to G17. L18 provides a ligand contact to NADP(+). NADPH is bound by residues R40, K44, D131, and L132. D131 is a binding site for NADP(+). S206 serves as the catalytic Proton donor. Residues Y220, K224, and S253 each contribute to the NADP(+) site. The active-site Proton acceptor is Y220. Catalysis depends on K224, which acts as the Lowers pKa of active site Tyr. A helical membrane pass occupies residues F324 to L344.

This sequence belongs to the short-chain dehydrogenases/reductases (SDR) family.

It localises to the endoplasmic reticulum membrane. The catalysed reaction is sphinganine + NADP(+) = 3-oxosphinganine + NADPH + H(+). It functions in the pathway lipid metabolism; sphingolipid metabolism. Its function is as follows. Catalyzes the reduction of 3'-oxosphinganine (3-ketodihydrosphingosine/KDS) to sphinganine (dihydrosphingosine/DHS), the second step of de novo sphingolipid biosynthesis. The chain is 3-ketodihydrosphingosine reductase TSC10 (TSC10) from Candida glabrata (strain ATCC 2001 / BCRC 20586 / JCM 3761 / NBRC 0622 / NRRL Y-65 / CBS 138) (Yeast).